A 288-amino-acid chain; its full sequence is ATP phosphoribosyltransferase (288 aa).

It belongs to the ATP phosphoribosyltransferase family. Long subfamily. Mg(2+) is required as a cofactor.

It is found in the cytoplasm. The enzyme catalyses 1-(5-phospho-beta-D-ribosyl)-ATP + diphosphate = 5-phospho-alpha-D-ribose 1-diphosphate + ATP. Its pathway is amino-acid biosynthesis; L-histidine biosynthesis; L-histidine from 5-phospho-alpha-D-ribose 1-diphosphate: step 1/9. Feedback inhibited by histidine. Catalyzes the condensation of ATP and 5-phosphoribose 1-diphosphate to form N'-(5'-phosphoribosyl)-ATP (PR-ATP). Has a crucial role in the pathway because the rate of histidine biosynthesis seems to be controlled primarily by regulation of HisG enzymatic activity. The protein is ATP phosphoribosyltransferase of Methanococcus maripaludis (strain C6 / ATCC BAA-1332).